We begin with the raw amino-acid sequence, 336 residues long: Large ribosomal subunit protein uL10 (336 aa).

Positions 305-336 are disordered; it reads AVVATEEAPKAETKKEEKKEEAAPAAGLGLLF. Residues 311-326 are compositionally biased toward basic and acidic residues; the sequence is EAPKAETKKEEKKEEA.

This sequence belongs to the universal ribosomal protein uL10 family. As to quaternary structure, part of the 50S ribosomal subunit. Forms part of the ribosomal stalk which helps the ribosome interact with GTP-bound translation factors. Forms a heptameric L10(L12)2(L12)2(L12)2 complex, where L10 forms an elongated spine to which the L12 dimers bind in a sequential fashion.

Its function is as follows. Forms part of the ribosomal stalk, playing a central role in the interaction of the ribosome with GTP-bound translation factors. The protein is Large ribosomal subunit protein uL10 of Methanococcus vannielii (strain ATCC 35089 / DSM 1224 / JCM 13029 / OCM 148 / SB).